The chain runs to 172 residues: C-phycocyanin beta chain (172 aa).

An N4-methylasparagine modification is found at Asn-72. (2R,3E)-phycocyanobilin-binding residues include Cys-82 and Cys-153.

Belongs to the phycobiliprotein family. Heterodimer of an alpha and a beta subunit, which further assembles into trimers and the trimers into hexamers. The basic functional unit of phycobiliproteins is a ring-shaped hexamer formed from two back-to-back trimers contacting via the alpha chain subunits. The trimers are composed of alpha/beta subunit heterodimers arranged around a three-fold axis of symmetry. The phycoerythrins also contain a gamma subunit which is located in the center of the hexamer. Contains two covalently linked phycocyanobilin chromophores.

Its subcellular location is the plastid. The protein localises to the cyanelle thylakoid membrane. Functionally, light-harvesting photosynthetic bile pigment-protein from the phycobiliprotein complex (phycobilisome, PBS). Phycocyanin is the major phycobiliprotein in the PBS rod. The chain is C-phycocyanin beta chain (cpcB) from Cyanophora paradoxa.